The sequence spans 205 residues: ATP-dependent dethiobiotin synthetase BioD (205 aa).

Mg(2+) is bound at residue Thr16. Lys32 is an active-site residue. Thr36 serves as a coordination point for substrate. Glu97 lines the Mg(2+) pocket. An ATP-binding site is contributed by Glu97–Gly100.

It belongs to the dethiobiotin synthetase family. In terms of assembly, homodimer. Mg(2+) is required as a cofactor.

The protein resides in the cytoplasm. The enzyme catalyses (7R,8S)-7,8-diammoniononanoate + CO2 + ATP = (4R,5S)-dethiobiotin + ADP + phosphate + 3 H(+). It participates in cofactor biosynthesis; biotin biosynthesis; biotin from 7,8-diaminononanoate: step 1/2. Functionally, catalyzes a mechanistically unusual reaction, the ATP-dependent insertion of CO2 between the N7 and N8 nitrogen atoms of 7,8-diaminopelargonic acid (DAPA, also called 7,8-diammoniononanoate) to form a ureido ring. The polypeptide is ATP-dependent dethiobiotin synthetase BioD (Paramagnetospirillum magneticum (strain ATCC 700264 / AMB-1) (Magnetospirillum magneticum)).